Consider the following 313-residue polypeptide: Peroxidase 57 (313 aa).

An N-terminal signal peptide occupies residues 1-22; the sequence is MMKGAKFSSLLVLFFIFPIAFA. Disulfide bonds link Cys33–Cys109, Cys66–Cys71, Cys115–Cys309, and Cys192–Cys224. The active-site Proton acceptor is the His64. Positions 65, 68, 70, 72, and 74 each coordinate Ca(2+). Residue Pro155 coordinates substrate. His185 is a binding site for heme b. Ca(2+) is bound at residue Thr186. Ca(2+) is bound by residues Asp233, Ser236, and Asp241.

The protein belongs to the peroxidase family. Classical plant (class III) peroxidase subfamily. Heme b serves as cofactor. Requires Ca(2+) as cofactor. As to expression, mainly expressed in roots.

Its subcellular location is the secreted. The enzyme catalyses 2 a phenolic donor + H2O2 = 2 a phenolic radical donor + 2 H2O. Functionally, removal of H(2)O(2), oxidation of toxic reductants, biosynthesis and degradation of lignin, suberization, auxin catabolism, response to environmental stresses such as wounding, pathogen attack and oxidative stress. These functions might be dependent on each isozyme/isoform in each plant tissue. This chain is Peroxidase 57 (PER57), found in Arabidopsis thaliana (Mouse-ear cress).